Reading from the N-terminus, the 1186-residue chain is uncharacterized protein (1186 aa).

This is an uncharacterized protein from Acheta domesticus (House cricket).